We begin with the raw amino-acid sequence, 185 residues long: Large ribosomal subunit protein uL5 (185 aa).

This sequence belongs to the universal ribosomal protein uL5 family. Part of the 50S ribosomal subunit; part of the 5S rRNA/L5/L18/L25 subcomplex. Contacts the 5S rRNA and the P site tRNA. Forms a bridge to the 30S subunit in the 70S ribosome.

In terms of biological role, this is one of the proteins that bind and probably mediate the attachment of the 5S RNA into the large ribosomal subunit, where it forms part of the central protuberance. In the 70S ribosome it contacts protein S13 of the 30S subunit (bridge B1b), connecting the 2 subunits; this bridge is implicated in subunit movement. Contacts the P site tRNA; the 5S rRNA and some of its associated proteins might help stabilize positioning of ribosome-bound tRNAs. The protein is Large ribosomal subunit protein uL5 of Xanthobacter autotrophicus (strain ATCC BAA-1158 / Py2).